A 332-amino-acid polypeptide reads, in one-letter code: Probable ABC transporter permease protein YphD (332 aa).

Helical transmembrane passes span 28–48 (GLLV…PGFI), 63–83 (IGIA…DVSV), 84–104 (GPMV…EVPL), 105–125 (AVAC…AGVL), 131–151 (VPSF…GLFM), 172–192 (FLGV…FVFI), 222–242 (VRIL…ILLA), 251–271 (GAAN…GTAL), 278–298 (LFGT…LVLL), and 303–323 (FFQQ…NILL).

The protein belongs to the binding-protein-dependent transport system permease family. AraH/RbsC subfamily.

The protein resides in the cell inner membrane. Its function is as follows. Probably part of the binding-protein-dependent transport system YphDEF. Probably responsible for the translocation of the substrate across the membrane. This Escherichia coli (strain K12) protein is Probable ABC transporter permease protein YphD (yphD).